Here is a 306-residue protein sequence, read N- to C-terminus: D-alanine--D-alanine ligase (306 aa).

The region spanning 107-303 (KHLFKSAGLS…FEQLVVRILE (197 aa)) is the ATP-grasp domain. 134–189 (IMQQFKKVMVKPSHEGSSIGMAQASTPQELEDALSNAFKFDSQVLVEQWISGREFT) lines the ATP pocket. Aspartate 257, glutamate 270, and asparagine 272 together coordinate Mg(2+).

This sequence belongs to the D-alanine--D-alanine ligase family. Mg(2+) is required as a cofactor. Requires Mn(2+) as cofactor.

The protein localises to the cytoplasm. It catalyses the reaction 2 D-alanine + ATP = D-alanyl-D-alanine + ADP + phosphate + H(+). It functions in the pathway cell wall biogenesis; peptidoglycan biosynthesis. Its function is as follows. Cell wall formation. This chain is D-alanine--D-alanine ligase, found in Pseudoalteromonas translucida (strain TAC 125).